The primary structure comprises 189 residues: Elongation factor P (189 aa).

Belongs to the elongation factor P family.

It is found in the cytoplasm. The protein operates within protein biosynthesis; polypeptide chain elongation. Functionally, involved in peptide bond synthesis. Stimulates efficient translation and peptide-bond synthesis on native or reconstituted 70S ribosomes in vitro. Probably functions indirectly by altering the affinity of the ribosome for aminoacyl-tRNA, thus increasing their reactivity as acceptors for peptidyl transferase. The polypeptide is Elongation factor P (Pseudomonas entomophila (strain L48)).